Consider the following 165-residue polypeptide: Small ribosomal subunit protein eS10 (165 aa).

The residue at position 12 (Tyr-12) is a Phosphotyrosine. Positions 90–165 (VPATLRRSRP…FGRGRGQPPQ (76 aa)) are disordered. The segment covering 97–128 (SRPETGRPRPKGPEGERPARFTRGEADRDTYR) has biased composition (basic and acidic residues). Residues Lys-138 and Lys-139 each participate in a glycyl lysine isopeptide (Lys-Gly) (interchain with G-Cter in ubiquitin) cross-link. The residue at position 146 (Ser-146) is a Phosphoserine. Arg-153 is subject to Omega-N-methylarginine. The segment covering 154–165 (GGFGRGRGQPPQ) has biased composition (gly residues). Residues Arg-158 and Arg-160 each carry the symmetric dimethylarginine modification.

The protein belongs to the eukaryotic ribosomal protein eS10 family. Component of the small ribosomal subunit. The methylated form interacts with NPM1. Methylated by PRMT5. Methylation is necessary for its interaction with NPS1, its localization in the granular component (GC) region of the nucleolus, for the proper assembly of ribosomes, protein synthesis and optimal cell proliferation. In terms of processing, monoubiquitinated by ZNF598 when a ribosome has stalled during translation of poly(A) sequences, leading to preclude synthesis of a long poly-lysine tail and initiate the ribosome quality control (RQC) pathway to degrade the potentially detrimental aberrant nascent polypeptide. Deubiquitinated by OTUD3 and USP21, antagonizing ZNF598 activity. Deubiquitinated by OTUD1, antagonizing ZNF598 activity and stimulating formation of polysomes: deubiquitination by OTUD1 promotes stability and translation of a subset mRNAs with a high abundance of rare codons can limit the translation rate. Deubiquitinated by USP10.

The protein resides in the cytoplasm. It localises to the nucleus. It is found in the nucleolus. In terms of biological role, component of the 40S ribosomal subunit. The ribosome is a large ribonucleoprotein complex responsible for the synthesis of proteins in the cell. The chain is Small ribosomal subunit protein eS10 (Rps10) from Rattus norvegicus (Rat).